A 125-amino-acid polypeptide reads, in one-letter code: Protein ApaG (125 aa).

The 125-residue stretch at 1–125 folds into the ApaG domain; it reads MINAPRVCVQ…FRLAIPSLIH (125 aa).

The sequence is that of Protein ApaG from Pectobacterium carotovorum subsp. carotovorum (strain PC1).